We begin with the raw amino-acid sequence, 241 residues long: MDFISKTIGLRLGYNKTHKLIWSLSKNNPIFIQTNHFLEYIIKNDPFFCGLILIDFQLMQYIVVHKNQLGNFSPLKNNLPNSINLFLKLKIATEIQSNFNSVFILEERLHFLFFKYLNKMKNLKMLNNLKIKVKIKFLNNPILEPQWIFYKLHQDLYKGINIRRALAKISSNVIKKGAEGVKIQIKGRINGVDKATVIVEEKGKMPLQNLSSEINYYSRALKTVYGLLGVKIWVFKGFLLK.

It belongs to the universal ribosomal protein uS3 family. As to quaternary structure, part of the 30S ribosomal subunit.

The protein resides in the plastid. The protein is Small ribosomal subunit protein uS3c (rps3) of Helicosporidium sp. subsp. Simulium jonesii (Green alga).